A 399-amino-acid chain; its full sequence is Glutathione S-transferase LANCL1 (399 aa).

Ala2 carries the post-translational modification N-acetylalanine. Lys142 is subject to N6-acetyllysine. Cys276 provides a ligand contact to Zn(2+). Lys317 serves as a coordination point for glutathione. The Zn(2+) site is built by Cys322 and His323. Residue 364–367 (RTPD) participates in glutathione binding.

It belongs to the LanC-like protein family. Interacts with the C-terminal of STOM. Interacts with the EPS8 SH3 domain. Interaction with EPS8 is inhibited by glutathione binding. Expressed in brain.

It localises to the cytoplasm. It is found in the cell membrane. It catalyses the reaction RX + glutathione = an S-substituted glutathione + a halide anion + H(+). The enzyme catalyses 1-chloro-2,4-dinitrobenzene + glutathione = 2,4-dinitrophenyl-S-glutathione + chloride + H(+). Functionally, functions as a glutathione transferase. Catalyzes conjugation of the glutathione (GSH) to artificial substrates 1-chloro-2,4-dinitrobenzene (CDNB) and p-nitrophenyl acetate. Mitigates neuronal oxidative stress during normal postnatal development and in response to oxidative stresses probably through GSH antioxidant defense mechanism. May play a role in EPS8 signaling. Binds glutathione. The protein is Glutathione S-transferase LANCL1 (LANCL1) of Bos taurus (Bovine).